The sequence spans 234 residues: tRNA1(Val) (adenine(37)-N6)-methyltransferase (234 aa).

Belongs to the methyltransferase superfamily. tRNA (adenine-N(6)-)-methyltransferase family.

It is found in the cytoplasm. It catalyses the reaction adenosine(37) in tRNA1(Val) + S-adenosyl-L-methionine = N(6)-methyladenosine(37) in tRNA1(Val) + S-adenosyl-L-homocysteine + H(+). Its function is as follows. Specifically methylates the adenine in position 37 of tRNA(1)(Val) (anticodon cmo5UAC). In Aliivibrio fischeri (strain MJ11) (Vibrio fischeri), this protein is tRNA1(Val) (adenine(37)-N6)-methyltransferase.